The chain runs to 433 residues: Putative zinc metalloprotease BB_0118 (433 aa).

Position 17 (His-17) interacts with Zn(2+). Glu-18 is a catalytic residue. His-21 lines the Zn(2+) pocket. A helical membrane pass occupies residues 98–120; the sequence is ILIYFAGPLFNLIFSFIVFIFIS. The PDZ domain maps to 193-265; it reads TVSLQDFLKE…VVEIKFSRNG (73 aa). 3 helical membrane-spanning segments follow: residues 334-356, 366-388, and 401-423; these read VSGPVGIVGILSSSYSLGILYWI, LAGMNLFFIVIPIFDGGQIFISF, and TIYSFYSFGIFFGLFLFGLGLFN.

It belongs to the peptidase M50B family. The cofactor is Zn(2+).

It localises to the cell inner membrane. This Borreliella burgdorferi (strain ATCC 35210 / DSM 4680 / CIP 102532 / B31) (Borrelia burgdorferi) protein is Putative zinc metalloprotease BB_0118.